Reading from the N-terminus, the 512-residue chain is GMP synthase [glutamine-hydrolyzing] (512 aa).

The Glutamine amidotransferase type-1 domain occupies 7 to 197; the sequence is LVLVVDFGGQ…LFKVAGLKAD (191 aa). Cysteine 84 functions as the Nucleophile in the catalytic mechanism. Residues histidine 171 and glutamate 173 contribute to the active site. The GMPS ATP-PPase domain maps to 198–387; the sequence is WSMASFAEEK…LGIPHKLVWR (190 aa). An ATP-binding site is contributed by 225–231; it reads SGGVDSS.

Homodimer.

The enzyme catalyses XMP + L-glutamine + ATP + H2O = GMP + L-glutamate + AMP + diphosphate + 2 H(+). It functions in the pathway purine metabolism; GMP biosynthesis; GMP from XMP (L-Gln route): step 1/1. Its function is as follows. Catalyzes the synthesis of GMP from XMP. The sequence is that of GMP synthase [glutamine-hydrolyzing] from Clostridium novyi (strain NT).